A 293-amino-acid polypeptide reads, in one-letter code: Shikimate dehydrogenase (NADP(+)) (293 aa).

Residues 26-28 (SKS) and T73 each bind shikimate. Residue K77 is the Proton acceptor of the active site. E89 contacts NADP(+). Shikimate-binding residues include N98 and D113. Residues 137–141 (GAGGA), 161–166 (NRTRQR), and I231 each bind NADP(+). Position 233 (Y233) interacts with shikimate. G254 provides a ligand contact to NADP(+).

It belongs to the shikimate dehydrogenase family. Homodimer.

It catalyses the reaction shikimate + NADP(+) = 3-dehydroshikimate + NADPH + H(+). The protein operates within metabolic intermediate biosynthesis; chorismate biosynthesis; chorismate from D-erythrose 4-phosphate and phosphoenolpyruvate: step 4/7. In terms of biological role, involved in the biosynthesis of the chorismate, which leads to the biosynthesis of aromatic amino acids. Catalyzes the reversible NADPH linked reduction of 3-dehydroshikimate (DHSA) to yield shikimate (SA). The protein is Shikimate dehydrogenase (NADP(+)) of Bartonella quintana (strain Toulouse) (Rochalimaea quintana).